Here is a 1051-residue protein sequence, read N- to C-terminus: MNFKIKTFFSIKSNKIFYTDFYFFLKKKLIILIKNIFPEYFNFNNKYKNWNLICLYDLLYFKVNNINFLDNVQYINSLIKIFLPLKFQNLKTNKVFFKNLLIFELPKYNSYNYCYLNGLKKIFISKYFTSNGIFFNKYLKRKYNIYYAKLLLTNSNFFNIILDLKLKQIYLSIKNLKFNFILFLYYLGIKNTDILKYSRYKNSKILKLLIFSALQTDLVNNKKIILKNLNYLKSIFKLTILNKNYKNFIISKDKLNYNYGDFSKNNLLIIDFIFILDLLLDLQSKKLCFKTIDHLDNKHINTIGNYFQHNFKFYLKKFISIIPNLIKLQKFSLLKVYNFKELLILNPLIQYLEQINSFSELMHKYKLNNYNSFSKGILNLREICLNQLGKLCLIDTTEGINCGLVVSFAKHIRIYKKGIIQVYFSSIFKNKTKEFLNFKTSLDQELYLIQFNNINLRKIKYLMNVRLVYNKNNFRIKFFSNKKSILLEFTDLFSFTENLIPFIKYNDPARCLMGAKMQSQSVPLLNKKKSFVITGYEKEIITKSDTTIKALQEGIVLNASSLKIHIKDLFNREIVYYLSKYKKSNQNTIIHQKPLVWNGERVFTNQLLTQHQDIIDSEFAIGNNLLFYYGNFCGYDFEDAVIVSKRVLYQQLFSSLHMDIYEFNFCYNNENDIEFSTLEIPKQSYYIKKNLDSLGIIKEGEKILTGSILLTKIKVAKPTYTYKSIFKLIYSIFGKTIRNIKDNSLYIQTGKSGRVSKIELFLVNISSRHKYKTYNNSYLKCRIFICKQRFLTVGDKLCGRYGNKGILSYIAENADLPFLQNSFYPDIIVGALGIPSRMNLGQLFEALVGKISFSYNIRILPSFTTSSNLYFNYLKILIYNFLMFNNFKKGFNWLYNFNLPGKFIIRDGRTGVKLKSSVLCGVSRYSKLIHLIKDKLHFRTTGPYTEILQQPLKGKKNLGGQRFGEMEIWALEAFGASYNLKEILNYKSDDCFARNNLKEYLLFRNTELQNSTITESFRVILKEFNGLILNLELFLITDDLEENYLNLTINY.

This sequence belongs to the RNA polymerase beta chain family. In terms of assembly, in plastids the minimal PEP RNA polymerase catalytic core is composed of four subunits: alpha, beta, beta', and beta''. When a (nuclear-encoded) sigma factor is associated with the core the holoenzyme is formed, which can initiate transcription (Potential).

Its subcellular location is the plastid. The protein resides in the apicoplast. It carries out the reaction RNA(n) + a ribonucleoside 5'-triphosphate = RNA(n+1) + diphosphate. Functionally, DNA-dependent RNA polymerase catalyzes the transcription of DNA into RNA using the four ribonucleoside triphosphates as substrates. This Toxoplasma gondii protein is DNA-directed RNA polymerase subunit beta (rpoB).